We begin with the raw amino-acid sequence, 455 residues long: Serine--tRNA ligase (455 aa).

L-serine is bound at residue 252–254 (TSE). ATP is bound by residues 283 to 285 (RKE) and Val299. Position 306 (Glu306) interacts with L-serine. 370–373 (EVVS) contributes to the ATP binding site. Thr406 is an L-serine binding site.

This sequence belongs to the class-II aminoacyl-tRNA synthetase family. Type-1 seryl-tRNA synthetase subfamily. In terms of assembly, homodimer. The tRNA molecule binds across the dimer.

The protein resides in the cytoplasm. The catalysed reaction is tRNA(Ser) + L-serine + ATP = L-seryl-tRNA(Ser) + AMP + diphosphate + H(+). It carries out the reaction tRNA(Sec) + L-serine + ATP = L-seryl-tRNA(Sec) + AMP + diphosphate + H(+). It participates in aminoacyl-tRNA biosynthesis; selenocysteinyl-tRNA(Sec) biosynthesis; L-seryl-tRNA(Sec) from L-serine and tRNA(Sec): step 1/1. Functionally, catalyzes the attachment of serine to tRNA(Ser). Is also able to aminoacylate tRNA(Sec) with serine, to form the misacylated tRNA L-seryl-tRNA(Sec), which will be further converted into selenocysteinyl-tRNA(Sec). This chain is Serine--tRNA ligase, found in Thermococcus sibiricus (strain DSM 12597 / MM 739).